The primary structure comprises 62 residues: Large ribosomal subunit protein eL24 (62 aa).

Cys-6, Cys-9, Cys-32, and Cys-36 together coordinate Zn(2+). A C4-type zinc finger spans residues 6–36; the sequence is CSFCGADIPPGYGIMYVRSDGTVQRFCSRKC.

Belongs to the eukaryotic ribosomal protein eL24 family. As to quaternary structure, part of the 50S ribosomal subunit. Forms a cluster with proteins L3 and L14. Requires Zn(2+) as cofactor.

In terms of biological role, binds to the 23S rRNA. This chain is Large ribosomal subunit protein eL24, found in Pyrobaculum calidifontis (strain DSM 21063 / JCM 11548 / VA1).